The primary structure comprises 354 residues: Protein RecA (354 aa).

67–74 (GPESSGKT) is an ATP binding site.

It belongs to the RecA family.

It localises to the cytoplasm. Can catalyze the hydrolysis of ATP in the presence of single-stranded DNA, the ATP-dependent uptake of single-stranded DNA by duplex DNA, and the ATP-dependent hybridization of homologous single-stranded DNAs. It interacts with LexA causing its activation and leading to its autocatalytic cleavage. The chain is Protein RecA from Enterobacter agglomerans (Erwinia herbicola).